Reading from the N-terminus, the 522-residue chain is Non-structural maintenance of chromosome element 6 (522 aa).

The span at 482–492 (KQKDRYFKDKT) shows a compositional bias: basic and acidic residues. The segment at 482–522 (KQKDRYFKDKTSNLSMKENKSFSAKKVKKGKKKNKRQAYKR) is disordered. A compositionally biased stretch (basic residues) spans 504–522 (SAKKVKKGKKKNKRQAYKR).

In terms of assembly, component of the smc5/smc6 complex which consists of two subcomplexes, smc5-smc6-nse2 and nse1-nse2-nse4. Interacts with nse5.

It is found in the nucleus. It localises to the chromosome. Its function is as follows. Acts in a DNA repair pathway for removal of UV-induced DNA damage that is distinct from classical nucleotide excision repair and in repair of ionizing radiation damage. Functions in homologous recombination repair of DNA double strand breaks and in recovery of stalled replication forks. May prevent formation of excessive Holliday junctions or assist in their resolution. This is Non-structural maintenance of chromosome element 6 (nse6) from Schizosaccharomyces pombe (strain 972 / ATCC 24843) (Fission yeast).